Here is a 403-residue protein sequence, read N- to C-terminus: Heptahelical transmembrane protein ADIPOR3 (403 aa).

Topologically, residues 1 to 73 (MAAAAGEEVE…LSAFSIHNET (73 aa)) are cytoplasmic. The helical transmembrane segment at 74 to 94 (LNVWTHLIGFFIFLVLTIYTA) threads the bilayer. Residues 95–209 (TQVPNVVDLQ…QLIRPIPRWP (115 aa)) are Extracellular-facing. The helical transmembrane segment at 210 to 230 (FYAFLGGAMFCLLASSTCHLL) threads the bilayer. At 231–246 (SCHSRRLAYIMLRLDY) the chain is on the cytoplasmic side. The helical transmembrane segment at 247–267 (AGIAALIATSFYPPVYYSFMC) threads the bilayer. The Extracellular portion of the chain corresponds to 268 to 274 (YPFFCNL). The helical transmembrane segment at 275-295 (YLSCITILGVATIAFSLLPVF) threads the bilayer. Residues 296–306 (QNPEFRTIRAC) lie on the Cytoplasmic side of the membrane. A helical membrane pass occupies residues 307-327 (LFFGMGASGVIPVIHKLILFW). Residues 328–331 (HQPE) lie on the Extracellular side of the membrane. Residues 332–352 (ALHTTAYEVLMGLFYGIGALV) form a helical membrane-spanning segment. Residues 353–374 (YATRVPERWMPGKFDIAGHSHQ) lie on the Cytoplasmic side of the membrane. A helical transmembrane segment spans residues 375 to 395 (LFHVLVVAGAYTHYHSGLVYL). Residues 396–403 (KWRDVQGC) are Extracellular-facing.

Belongs to the ADIPOR family.

The protein localises to the membrane. Its function is as follows. May play a role in abiotic stress response. The chain is Heptahelical transmembrane protein ADIPOR3 (ADIPOR3) from Oryza sativa subsp. japonica (Rice).